The following is a 951-amino-acid chain: Valine--tRNA ligase (951 aa).

A 'HIGH' region motif is present at residues 42–52 (PNVTGSLHMGH). The 'KMSKS' region motif lies at 554-558 (KMSKS). Residue Lys-557 participates in ATP binding. A coiled-coil region spans residues 880-944 (AGLINKEDEL…AEAKAKLIEQ (65 aa)).

It belongs to the class-I aminoacyl-tRNA synthetase family. ValS type 1 subfamily. As to quaternary structure, monomer.

The protein localises to the cytoplasm. It catalyses the reaction tRNA(Val) + L-valine + ATP = L-valyl-tRNA(Val) + AMP + diphosphate. Catalyzes the attachment of valine to tRNA(Val). As ValRS can inadvertently accommodate and process structurally similar amino acids such as threonine, to avoid such errors, it has a 'posttransfer' editing activity that hydrolyzes mischarged Thr-tRNA(Val) in a tRNA-dependent manner. This is Valine--tRNA ligase from Shigella flexneri.